Here is a 203-residue protein sequence, read N- to C-terminus: Fucoxanthin-chlorophyll a-c binding protein, chloroplastic (203 aa).

The N-terminal 30 residues, 1–30 (MKLAIAALLAGSAAAFAPAQSGKASTALNM), are a transit peptide targeting the chloroplast.

The protein belongs to the fucoxanthin chlorophyll protein family. The LHC complex of chromophytic algae is composed of fucoxanthin, chlorophyll A and C bound non-covalently by fucoxanthin chlorophyll proteins (FCPs). The ratio of pigments in this LHC is; fucoxanthin: chlorophyll C: chlorophyll A; (0.6-1): (0.1-0.3): (1).

It localises to the plastid. Its subcellular location is the chloroplast thylakoid membrane. Its function is as follows. The light-harvesting complex (LHC) functions as a light receptor, it captures and delivers excitation energy to photosystems with which it is closely associated. Energy is transferred from the carotenoid and chlorophyll C (or B) to chlorophyll A and the photosynthetic reaction centers where it is used to synthesize ATP and reducing power. This is Fucoxanthin-chlorophyll a-c binding protein, chloroplastic (FCPA) from Trieres chinensis (Marine centric diatom).